We begin with the raw amino-acid sequence, 298 residues long: Acetylglutamate kinase (298 aa).

Substrate-binding positions include 61 to 62 (GG), Arg-83, and Asn-188.

Belongs to the acetylglutamate kinase family. ArgB subfamily.

The protein resides in the cytoplasm. It catalyses the reaction N-acetyl-L-glutamate + ATP = N-acetyl-L-glutamyl 5-phosphate + ADP. The protein operates within amino-acid biosynthesis; L-arginine biosynthesis; N(2)-acetyl-L-ornithine from L-glutamate: step 2/4. Functionally, catalyzes the ATP-dependent phosphorylation of N-acetyl-L-glutamate. The polypeptide is Acetylglutamate kinase (Syntrophobacter fumaroxidans (strain DSM 10017 / MPOB)).